A 276-amino-acid polypeptide reads, in one-letter code: C-type lectin domain family 12 member B (276 aa).

The Cytoplasmic portion of the chain corresponds to 1 to 43 (MSEDMTYATLTFQDSVAAGNNQDRNNLRKRGYPAPSSIWRQAA). The short motif at 5-10 (MTYATL) is the ITIM motif element. Phosphotyrosine is present on Tyr7. The chain crosses the membrane as a helical; Signal-anchor for type II membrane protein span at residues 44-64 (LGLLTLCVMLLIGLVTLGIMF). The Extracellular segment spans residues 65–276 (LQMSSEINSD…AALVKIEDLD (212 aa)). 3 N-linked (GlcNAc...) asparagine glycosylation sites follow: Asn91, Asn176, and Asn237. Residues 150–264 (YQTSCYYFAV…CSAEISWICE (115 aa)) form the C-type lectin domain. Intrachain disulfides connect Cys172-Cys263 and Cys242-Cys255.

In terms of assembly, homodimer. Interacts (via ITIM motif) with PTPN6. Interacts (via ITIM motif) with PTPN11; this interaction triggers dephosphorylation and activation of PTPN11.

Its subcellular location is the cell membrane. In terms of biological role, inhibitory receptor postulated to negatively regulate immune and non-immune functions. Upon phosphorylation, recruits SH2 domain-containing PTPN6 and PTPN11 phosphatases to its ITIM motif and antagonizes activation signals. Although it inhibits KLRK1/NKG2D-mediated signaling, it does not bind known ligands of KLRK1/NKG2D and therefore is not its inhibitory counterpart. May limit activation of myeloid cell subsets in response to infection or tissue inflammation. May protect target cells against natural killer cell-mediated lysis. May negatively regulate cell cycle and differentiation of melanocytes via inactivation of STAT3. In Bos taurus (Bovine), this protein is C-type lectin domain family 12 member B (CLEC12B).